The primary structure comprises 579 residues: O-fucosyltransferase 24 (579 aa).

Residues 58-78 form a helical; Signal-anchor for type II membrane protein membrane-spanning segment; that stretch reads LWAFSLFLLSILGISLRLGLC. N-linked (GlcNAc...) asparagine glycosylation occurs at N133. 355–357 contributes to the substrate binding site; the sequence is HLR. 3 N-linked (GlcNAc...) asparagine glycosylation sites follow: N528, N573, and N576.

It belongs to the glycosyltransferase GT106 family.

The protein localises to the membrane. The protein operates within glycan metabolism. The chain is O-fucosyltransferase 24 from Arabidopsis thaliana (Mouse-ear cress).